A 433-amino-acid polypeptide reads, in one-letter code: Homoserine dehydrogenase (433 aa).

The NADPH site is built by T12, V13, and K102. Residue V13 participates in NAD(+) binding. NADP(+) is bound by residues V13 and K102. The Na(+) site is built by E126, V129, G131, and I133. 2 residues coordinate NADP(+): G184 and E187. Positions 187 and 198 each coordinate L-homoserine. K202 (proton donor) is an active-site residue. G303 is a binding site for NADPH. An NAD(+)-binding site is contributed by G303. NADP(+) is bound at residue G303. The 78-residue stretch at 356–433 folds into the ACT domain; the sequence is YCRFLCADVP…EIPSVIRVLS (78 aa).

Belongs to the homoserine dehydrogenase family. A metal cation serves as cofactor.

It carries out the reaction L-homoserine + NADP(+) = L-aspartate 4-semialdehyde + NADPH + H(+). The enzyme catalyses L-homoserine + NAD(+) = L-aspartate 4-semialdehyde + NADH + H(+). Its pathway is amino-acid biosynthesis; L-methionine biosynthesis via de novo pathway; L-homoserine from L-aspartate: step 3/3. The protein operates within amino-acid biosynthesis; L-threonine biosynthesis; L-threonine from L-aspartate: step 3/5. Functionally, catalyzes the conversion of L-aspartate-beta-semialdehyde (L-Asa) to L-homoserine (L-Hse), the third step in the biosynthesis of threonine and methionine from aspartate. The chain is Homoserine dehydrogenase (hom) from Synechocystis sp. (strain ATCC 27184 / PCC 6803 / Kazusa).